We begin with the raw amino-acid sequence, 266 residues long: Adaptin ear-binding coat-associated protein 2 (266 aa).

Disordered regions lie at residues 165–198 (MRKK…KSST) and 245–266 (DFTK…WVQF). Position 181 is a phosphoserine (Ser181). 2 short sequence motifs (WXXF motif) span residues 243–246 (WGDF) and 263–266 (WVQF). A compositionally biased stretch (low complexity) spans 249 to 266 (STGSPSSQSQPGTGWVQF).

This sequence belongs to the NECAP family. Interacts with AP1G1 and AP2A1 components of the adapter protein complexes AP-1 and AP-2. Interacts with the GAE domain proteins GGA1, GGA2 and GGA3. In terms of tissue distribution, expressed in brain, heart, kidney, liver, lung, skeletal muscles and testis (at protein level).

The protein resides in the cytoplasmic vesicle. Its subcellular location is the clathrin-coated vesicle membrane. It is found in the cell membrane. In terms of biological role, involved in endocytosis. This Mus musculus (Mouse) protein is Adaptin ear-binding coat-associated protein 2 (Necap2).